Consider the following 445-residue polypeptide: UPF0210 protein LACR_1020 (445 aa).

The protein belongs to the UPF0210 family. In terms of assembly, homodimer.

The polypeptide is UPF0210 protein LACR_1020 (Lactococcus lactis subsp. cremoris (strain SK11)).